We begin with the raw amino-acid sequence, 927 residues long: Translation initiation factor IF-2 (927 aa).

The interval 27–337 (LGLPVKSHAS…GAPKPVTERK (311 aa)) is disordered. The span at 49–69 (SFSSSKTKAPTNSVQTNQGVK) shows a compositional bias: polar residues. 2 stretches are compositionally biased toward basic and acidic residues: residues 70 to 86 (TESK…DDKP) and 101 to 138 (FKAE…DRRH). Residues 146 to 159 (GNRNDNRQGQQNNR) show a composition bias toward low complexity. Composition is skewed to basic and acidic residues over residues 160–171 (NKNDGRYADHKQ), 202–226 (YSRH…EQEL), and 234–257 (AQEE…KEIV). The segment covering 300 to 316 (NWNNQNQVRNQRNSNWN) has biased composition (low complexity). Residues 428 to 597 (ERPPVVTIMG…LLVAEMEELK (170 aa)) form the tr-type G domain. The interval 437–444 (GHVDHGKT) is G1. 437 to 444 (GHVDHGKT) provides a ligand contact to GTP. The interval 462 to 466 (GITQH) is G2. The segment at 483–486 (DTPG) is G3. GTP contacts are provided by residues 483 to 487 (DTPGH) and 537 to 540 (NKID). A G4 region spans residues 537-540 (NKID). The interval 573 to 575 (SAK) is G5.

Belongs to the TRAFAC class translation factor GTPase superfamily. Classic translation factor GTPase family. IF-2 subfamily.

It localises to the cytoplasm. One of the essential components for the initiation of protein synthesis. Protects formylmethionyl-tRNA from spontaneous hydrolysis and promotes its binding to the 30S ribosomal subunits. Also involved in the hydrolysis of GTP during the formation of the 70S ribosomal complex. This Streptococcus agalactiae serotype V (strain ATCC BAA-611 / 2603 V/R) protein is Translation initiation factor IF-2.